Here is a 319-residue protein sequence, read N- to C-terminus: Cytochrome c biogenesis protein CcsA (319 aa).

8 helical membrane passes run 9 to 29 (ILTH…LISL), 48 to 68 (TFFC…HFPL), 71 to 91 (LYES…VPYF), 98 to 118 (LSTI…SGLL), 143 to 163 (MILG…LLVI), 225 to 245 (IISL…VWAN), 258 to 275 (ETWA…LHTR), and 286 to 306 (AIVA…VNLL).

Belongs to the CcmF/CycK/Ccl1/NrfE/CcsA family. May interact with Ccs1.

Its subcellular location is the plastid. The protein resides in the chloroplast thylakoid membrane. In terms of biological role, required during biogenesis of c-type cytochromes (cytochrome c6 and cytochrome f) at the step of heme attachment. The polypeptide is Cytochrome c biogenesis protein CcsA (Eucalyptus globulus subsp. globulus (Tasmanian blue gum)).